The following is a 203-amino-acid chain: Small ribosomal subunit protein uS4 (203 aa).

Residues 93–173 (RRFDNVVFRS…IPSWIQVDKA (81 aa)) form the S4 RNA-binding domain.

Belongs to the universal ribosomal protein uS4 family. As to quaternary structure, part of the 30S ribosomal subunit. Contacts protein S5. The interaction surface between S4 and S5 is involved in control of translational fidelity.

Functionally, one of the primary rRNA binding proteins, it binds directly to 16S rRNA where it nucleates assembly of the body of the 30S subunit. Its function is as follows. With S5 and S12 plays an important role in translational accuracy. This is Small ribosomal subunit protein uS4 from Chlorobium phaeobacteroides (strain DSM 266 / SMG 266 / 2430).